The primary structure comprises 247 residues: 4-hydroxy-tetrahydrodipicolinate reductase (247 aa).

Residues 9–14 (GAAGRM), 76–78 (GTT), and 103–106 (APNF) contribute to the NAD(+) site. Histidine 133 acts as the Proton donor/acceptor in catalysis. Position 134 (histidine 134) interacts with (S)-2,3,4,5-tetrahydrodipicolinate. The Proton donor role is filled by lysine 137. 143-144 (GT) lines the (S)-2,3,4,5-tetrahydrodipicolinate pocket.

Belongs to the DapB family.

The protein resides in the cytoplasm. The catalysed reaction is (S)-2,3,4,5-tetrahydrodipicolinate + NAD(+) + H2O = (2S,4S)-4-hydroxy-2,3,4,5-tetrahydrodipicolinate + NADH + H(+). The enzyme catalyses (S)-2,3,4,5-tetrahydrodipicolinate + NADP(+) + H2O = (2S,4S)-4-hydroxy-2,3,4,5-tetrahydrodipicolinate + NADPH + H(+). Its pathway is amino-acid biosynthesis; L-lysine biosynthesis via DAP pathway; (S)-tetrahydrodipicolinate from L-aspartate: step 4/4. Functionally, catalyzes the conversion of 4-hydroxy-tetrahydrodipicolinate (HTPA) to tetrahydrodipicolinate. This Beutenbergia cavernae (strain ATCC BAA-8 / DSM 12333 / CCUG 43141 / JCM 11478 / NBRC 16432 / NCIMB 13614 / HKI 0122) protein is 4-hydroxy-tetrahydrodipicolinate reductase.